The following is a 269-amino-acid chain: Formamidopyrimidine-DNA glycosylase (269 aa).

Residue Pro2 is the Schiff-base intermediate with DNA of the active site. Catalysis depends on Glu3, which acts as the Proton donor. The active-site Proton donor; for beta-elimination activity is Lys58. His91, Arg110, and Lys150 together coordinate DNA. The segment at 235–269 (SVYGCKNKKCYRCKGIIIKFVQNQRSTFYCKKCQT) adopts an FPG-type zinc-finger fold. Arg259 acts as the Proton donor; for delta-elimination activity in catalysis.

The protein belongs to the FPG family. In terms of assembly, monomer. Zn(2+) serves as cofactor.

The enzyme catalyses Hydrolysis of DNA containing ring-opened 7-methylguanine residues, releasing 2,6-diamino-4-hydroxy-5-(N-methyl)formamidopyrimidine.. It catalyses the reaction 2'-deoxyribonucleotide-(2'-deoxyribose 5'-phosphate)-2'-deoxyribonucleotide-DNA = a 3'-end 2'-deoxyribonucleotide-(2,3-dehydro-2,3-deoxyribose 5'-phosphate)-DNA + a 5'-end 5'-phospho-2'-deoxyribonucleoside-DNA + H(+). In terms of biological role, involved in base excision repair of DNA damaged by oxidation or by mutagenic agents. Acts as a DNA glycosylase that recognizes and removes damaged bases. Has a preference for oxidized purines, such as 7,8-dihydro-8-oxoguanine (8-oxoG). Has AP (apurinic/apyrimidinic) lyase activity and introduces nicks in the DNA strand. Cleaves the DNA backbone by beta-delta elimination to generate a single-strand break at the site of the removed base with both 3'- and 5'-phosphates. The protein is Formamidopyrimidine-DNA glycosylase of Vesicomyosocius okutanii subsp. Calyptogena okutanii (strain HA).